We begin with the raw amino-acid sequence, 175 residues long: ATP synthase subunit b (175 aa).

The helical transmembrane segment at 22-42 (LNLLETNIINIAIVFGLLIFL) threads the bilayer.

Belongs to the ATPase B chain family. F-type ATPases have 2 components, F(1) - the catalytic core - and F(0) - the membrane proton channel. F(1) has five subunits: alpha(3), beta(3), gamma(1), delta(1), epsilon(1). F(0) has four main subunits: a(1), b(1), b'(1) and c(10-14). The alpha and beta chains form an alternating ring which encloses part of the gamma chain. F(1) is attached to F(0) by a central stalk formed by the gamma and epsilon chains, while a peripheral stalk is formed by the delta, b and b' chains.

The protein localises to the cell inner membrane. F(1)F(0) ATP synthase produces ATP from ADP in the presence of a proton or sodium gradient. F-type ATPases consist of two structural domains, F(1) containing the extramembraneous catalytic core and F(0) containing the membrane proton channel, linked together by a central stalk and a peripheral stalk. During catalysis, ATP synthesis in the catalytic domain of F(1) is coupled via a rotary mechanism of the central stalk subunits to proton translocation. Functionally, component of the F(0) channel, it forms part of the peripheral stalk, linking F(1) to F(0). The chain is ATP synthase subunit b from Gloeobacter violaceus (strain ATCC 29082 / PCC 7421).